Consider the following 595-residue polypeptide: Elongation factor 4 (595 aa).

The tr-type G domain occupies 2–183 (KNIRNFCIIA…AIVEQVPAPA (182 aa)). GTP-binding positions include 14-19 (DHGKST) and 130-133 (NKVD).

The protein belongs to the TRAFAC class translation factor GTPase superfamily. Classic translation factor GTPase family. LepA subfamily.

Its subcellular location is the cell inner membrane. It catalyses the reaction GTP + H2O = GDP + phosphate + H(+). Its function is as follows. Required for accurate and efficient protein synthesis under certain stress conditions. May act as a fidelity factor of the translation reaction, by catalyzing a one-codon backward translocation of tRNAs on improperly translocated ribosomes. Back-translocation proceeds from a post-translocation (POST) complex to a pre-translocation (PRE) complex, thus giving elongation factor G a second chance to translocate the tRNAs correctly. Binds to ribosomes in a GTP-dependent manner. The polypeptide is Elongation factor 4 (Porphyromonas gingivalis (strain ATCC BAA-308 / W83)).